Consider the following 333-residue polypeptide: MHIAVLGAGSWGTTLAVLLARKGHAVKLWAHRPEFARTLQAERENTRYLKGTLFPDSLEVVGDLDGCIAEAEMIVTAVPSQALRETARAFSSLPFQGKIIVNVAKGIEVGSGMRMTEVLMDELPGLQPGRVAALYGPSHAEEVAREQPTTVVASSPSMETAEAVQEVFHTSRFRVYVNTDIVGVEVAGSVKNIIAIAAGISDGIGFGDNAKAAIITRGMAEISRLALKLGGDPMTISGLSGIGDLVVTCLSRHSRNRFVGEELGRGRSLDDIITHMNMIAEGVLSSKAVYALSSSLGVEMPITQAVYEMLFEAKPVEQAILDLMTREPKPERD.

Serine 10, tryptophan 11, histidine 31, arginine 32, and lysine 105 together coordinate NADPH. Sn-glycerol 3-phosphate contacts are provided by lysine 105, glycine 136, and serine 138. Alanine 140 serves as a coordination point for NADPH. The sn-glycerol 3-phosphate site is built by lysine 191, aspartate 244, serine 254, arginine 255, and asparagine 256. The active-site Proton acceptor is the lysine 191. Arginine 255 is an NADPH binding site. Positions 279 and 281 each coordinate NADPH.

Belongs to the NAD-dependent glycerol-3-phosphate dehydrogenase family.

The protein resides in the cytoplasm. It catalyses the reaction sn-glycerol 3-phosphate + NAD(+) = dihydroxyacetone phosphate + NADH + H(+). The enzyme catalyses sn-glycerol 3-phosphate + NADP(+) = dihydroxyacetone phosphate + NADPH + H(+). It participates in membrane lipid metabolism; glycerophospholipid metabolism. Catalyzes the reduction of the glycolytic intermediate dihydroxyacetone phosphate (DHAP) to sn-glycerol 3-phosphate (G3P), the key precursor for phospholipid synthesis. The chain is Glycerol-3-phosphate dehydrogenase [NAD(P)+] from Chlorobium luteolum (strain DSM 273 / BCRC 81028 / 2530) (Pelodictyon luteolum).